The chain runs to 1013 residues: Dichlorochromopyrrolate synthase (1013 aa).

This sequence belongs to the RebD family. As to quaternary structure, homodimer. Heme is required as a cofactor.

The catalysed reaction is 2 3-(7-chloroindol-3-yl)-2-iminopropanoate + H2O2 = dichlorochromopyrrolate + NH4(+) + 2 H2O + H(+). It catalyses the reaction 2 2-iminio-3-(indol-3-yl)propanoate + H2O2 = chromopyrrolate + NH4(+) + 2 H2O + H(+). The enzyme catalyses 2 H2O2 = O2 + 2 H2O. In terms of biological role, involved in the biosynthesis of the indolocarbazole antitumor agent rebeccamycin. Catalyzes the hydrogen peroxide-dependent dimerization of two L-tryptophan-derived molecules (imine form of indole 3-pyruvate (IPA)), to form dichlorochromopyrrolic acid (CPA), the precursor for the six-ring bisindolopyrrolocarbazole scaffold of the rebeccamycin. The hydrogen peroxide is provided together with iminoindolpropanoate by RebO. Due to the instability of indole 3-pyruvate (IPA), which is hydrolyzed in solution and exits in equilibrium with the predominant ketone form of IPA, the concerted functioning of the RebO/RebD system appears to prevent the buildup of significant amounts of IPA and its imine in solution, effectively shepherding the imine further down the biosynthetic chain. The chain is Dichlorochromopyrrolate synthase (rebD) from Lentzea aerocolonigenes (Lechevalieria aerocolonigenes).